The primary structure comprises 731 residues: RNA-binding protein RMD9-like, mitochondrial (731 aa).

Residues 1–10 (MIRLAQQTQV) are compositionally biased toward polar residues. Disordered regions lie at residues 1 to 29 (MIRLAQQTQVLKGKPPNQFVPHPTKNSLT), 77 to 133 (GGNI…GNSI), and 590 to 630 (QNDR…FNNP). Low complexity predominate over residues 83-100 (NNNNHLAQNNSNNSNNHH). The segment covering 101–122 (NNNRNHHHNNNRNHHQNNHNHS) has biased composition (basic residues). Phosphoserine is present on S132. The span at 598 to 617 (SNMNSTQISRTATPSPSLTP) shows a compositional bias: polar residues.

This sequence belongs to the RMD9 family. As to quaternary structure, monomer. In terms of processing, phosphorylated. Phosphorylation promotes binding to RNA.

Its subcellular location is the mitochondrion inner membrane. Its function is as follows. May be involved in the processing or stability of mitochondrial mRNAs. This Saccharomyces cerevisiae (strain ATCC 204508 / S288c) (Baker's yeast) protein is RNA-binding protein RMD9-like, mitochondrial.